The sequence spans 918 residues: Bromodomain testis-specific protein (918 aa).

Residues 1–26 (MSDVKPPQHFTMNGNPPPPEFKNPKK) form a disordered region. The Bromo 1 domain occupies 29 to 135 (RLTNHLQYIE…KLFLEKVAEM (107 aa)). The Nuclear localization signal signature appears at 204–215 (NGVKRKADTTTP). Disordered regions lie at residues 241-267 (RGSGRPIKPPCKDLPESPPQHQVGRRT), 379-430 (EPKN…RAHR), 575-712 (KNKP…SLVS), 738-764 (IPPLLSPLTSPSAAMPATGSQSTSSSQ), and 862-899 (DTPKAPEPSSVLQNSVDREREMARKREQERRRREAMSG). The Bromo 2 domain maps to 267–376 (TKLSERLKYC…DVFEFRFSKI (110 aa)). Residues 399–416 (SPSSSESSDSESSSPENS) are compositionally biased toward low complexity. A coiled-coil region spans residues 426-452 (ERAHRLASLEEQQLKAVREQLQLLTQT). One can recognise an NET domain in the interval 496–578 (DSEEEMNTLP…GCLRKKKNKP (83 aa)). Residues 575–584 (KNKPPKKSKI) show a composition bias toward basic residues. A compositionally biased stretch (basic and acidic residues) spans 605 to 617 (KIETDGEIKDTTH). Composition is skewed to low complexity over residues 622-648 (SDSSSSSSSSDSSSSDSSSSDSCDSDS) and 739-764 (PPLLSPLTSPSAAMPATGSQSTSSSQ). Residues 815 to 902 (EKELTTASRG…RREAMSGVID (88 aa)) are a coiled coil. Basic and acidic residues predominate over residues 877–896 (VDREREMARKREQERRRREA).

The protein belongs to the BET family.

Its subcellular location is the nucleus. Testis-specific chromatin protein that specifically binds histone H4 acetylated at 'Lys-5' and 'Lys-8' (H4K5ac and H4K8ac, respectively) and plays a key role in spermatogenesis. Required in late pachytene spermatocytes: plays a role in meiotic and post-meiotic cells by binding to acetylated histones at the promoter of specific meiotic and post-meiotic genes, facilitating their activation at the appropriate time. In the post-meiotic phase of spermatogenesis, binds to hyperacetylated histones and participates in their general removal from DNA. Also recognizes and binds a subset of butyrylated histones: able to bind histone H4 butyrylated at 'Lys-8' (H4K8ac), while it is not able to bind H4 butyrylated at 'Lys-5' (H4K5ac). This is Bromodomain testis-specific protein (brdt) from Danio rerio (Zebrafish).